Reading from the N-terminus, the 218-residue chain is Guanylate kinase (218 aa).

In terms of domain architecture, Guanylate kinase-like spans 14 to 193 (GVMLVLSSPS…AFASVRAIVS (180 aa)). 21–28 (SPSGAGKS) lines the ATP pocket.

This sequence belongs to the guanylate kinase family.

Its subcellular location is the cytoplasm. The catalysed reaction is GMP + ATP = GDP + ADP. Essential for recycling GMP and indirectly, cGMP. This Chelativorans sp. (strain BNC1) protein is Guanylate kinase.